The following is an 836-amino-acid chain: MSSESHGKAVAKAIRLPTENYTVEKEIGKGSFAIVYKGVSLRDGRNIAIKAVSRSKLKNKKLLENLEVEIAILKKIKHPHIVGLIDCERTSTDFYLIMEYCALGDLTFFIKKRRSLVMKHPLIKTVFDLYPPPSAEHNGLNRVLVVNYLQQLSSALKFLRSKNLVHRDIKPQNLLLCTPLQDYSDPKTFHEMGFIGIYNLPVLKIADFGFARFLPNTSLAETLCGSPLYMAPEILNYQKYNAKADLWSVGTVLYEMCCGRPPFKASNHLELFQKIKKANDEVTVPSNCYIEPKIFKLIKGLLTFDPEARMGFNEFFNNEVVTEDLSRYEASYEPDLESKSKDVAESNMFVSEYLVRPAAQEKANGGLRTDEGSAMPGAEHTYNKEREHYRERQDLQGQQQQQQQHPDSPPRGSTQGYQSSAGQTRMKSSYNDLILEKEYVVVEKKTVEVNSLADDFANNGPTTNNQGAQIIKPLRYRTSSSSDGHGGRRASLVERRLSISSLSPSNALSKALGLASVRLFGYQQPNTQTTSTSTHPTLLNPQIFHELTENAVLRADHHLNLFNEQISDSNITPFVESLSAKAFVMYSFAEMKFSQILPSPPSSTDYYSQSDKRLSNGSCAIDDDDDLDSGNPSSNQTLTPGANKVSAANVDNLIPAPELKKLCMESLLLYLKSLTILASSMKLTSKWWYENESKNCTLKLNILVQWIRDRFNECLDKAEFLRLKLHTLNQSEDPQVLDDEPTIFVEKLIYDRALDISRNAARLEMEGGNYNTCELAYATSLWMLEILLDEHLSSNEVYDDGYSSNITSLDESDKEMIRKYVSSIANRLKALKSKMS.

A Protein kinase domain is found at Tyr21–Val321. Residues Ile27–Val35 and Lys50 each bind ATP. Residue Asp168 is the Proton acceptor of the active site. 3 disordered regions span residues Glu387 to Arg425, Asn458 to Arg489, and Cys619 to Ala642. The span at Leu395 to Gln404 shows a compositional bias: low complexity. 3 stretches are compositionally biased toward polar residues: residues Arg411–Arg425, Asn459–Ala468, and Gly630–Pro640. The tract at residues Ile571–Ser836 is interaction with ATG13.

Belongs to the protein kinase superfamily. Ser/Thr protein kinase family. APG1/unc-51/ULK1 subfamily. As to quaternary structure, homodimer. Dimerization requires the presence of ATG13. Forms a ternary complex with ATG13 and ATG17.

It is found in the cytoplasm. The protein localises to the preautophagosomal structure membrane. It carries out the reaction L-seryl-[protein] + ATP = O-phospho-L-seryl-[protein] + ADP + H(+). The enzyme catalyses L-threonyl-[protein] + ATP = O-phospho-L-threonyl-[protein] + ADP + H(+). Its function is as follows. Serine/threonine protein kinase involved in the cytoplasm to vacuole transport (Cvt) and found to be essential in autophagy, where it is required for the formation of autophagosomes. Involved in the clearance of protein aggregates which cannot be efficiently cleared by the proteasome. Required for selective autophagic degradation of the nucleus (nucleophagy) as well as for mitophagy which contributes to regulate mitochondrial quantity and quality by eliminating the mitochondria to a basal level to fulfill cellular energy requirements and preventing excess ROS production. Also involved in endoplasmic reticulum-specific autophagic process, in selective removal of ER-associated degradation (ERAD) substrates. Plays a key role in ATG9 and ATG23 cycling through the pre-autophagosomal structure and is necessary to promote ATG18 binding to ATG9 through phosphorylation of ATG9. Catalyzes phosphorylation of ATG4, decreasing the interaction between ATG4 and ATG8 and impairing deconjugation of PE-conjugated forms of ATG8. The chain is Serine/threonine-protein kinase ATG1 from Kluyveromyces marxianus (strain DMKU3-1042 / BCC 29191 / NBRC 104275) (Yeast).